We begin with the raw amino-acid sequence, 310 residues long: Cytosolic Fe-S cluster assembly factor Nubp1 homolog (310 aa).

[4Fe-4S] cluster is bound by residues Cys-9, Cys-23, Cys-26, and Cys-32. Residue 63–70 participates in ATP binding; the sequence is GKGGVGKS. [4Fe-4S] cluster contacts are provided by Cys-240 and Cys-243.

Belongs to the Mrp/NBP35 ATP-binding proteins family. NUBP1/NBP35 subfamily. In terms of assembly, heterotetramer of 2 Nubp1 and 2 Nubp2 chains. [4Fe-4S] cluster is required as a cofactor.

The protein resides in the cytoplasm. Its function is as follows. Component of the cytosolic iron-sulfur (Fe/S) protein assembly (CIA) machinery. Required for maturation of extramitochondrial Fe-S proteins. The Nubp1-Nubp2 heterotetramer forms a Fe-S scaffold complex, mediating the de novo assembly of an Fe-S cluster and its transfer to target apoproteins. In Drosophila mojavensis (Fruit fly), this protein is Cytosolic Fe-S cluster assembly factor Nubp1 homolog.